Reading from the N-terminus, the 119-residue chain is Protein MGF 110-11L (119 aa).

Residues methionine 1 to alanine 17 form the signal peptide.

Belongs to the asfivirus MGF 110 family.

The chain is Protein MGF 110-11L from Ornithodoros (relapsing fever ticks).